Consider the following 234-residue polypeptide: GTP-binding protein YPT52 (234 aa).

Residues 10–17 (GDSSVGKS), 66–70 (DTAGQ), and 111–114 (NKVG) each bind GTP. Disordered stretches follow at residues 131 to 151 (QETP…EEQK) and 206 to 234 (NRQI…SCCS). Over residues 132-142 (ETPSTETSPDS) the composition is skewed to polar residues. Phosphoserine occurs at positions 139 and 142. Lysine 151 participates in a covalent cross-link: Glycyl lysine isopeptide (Lys-Gly) (interchain with G-Cter in ubiquitin). A compositionally biased stretch (polar residues) spans 217 to 234 (VDINLQRPSTNDPTSCCS). Residues cysteine 232 and cysteine 233 are each lipidated (S-geranylgeranyl cysteine).

It belongs to the small GTPase superfamily. Rab family. As to quaternary structure, interacts with ROY1, YIF1, YIP3, YIP4 and YIP5.

It localises to the cell membrane. The protein resides in the endoplasmic reticulum. In terms of biological role, required for transport in the endocytic pathway and for correct sorting of the vacuolar hydrolases suggesting a possible intersection of the endocytic with the vacuolar sorting pathway. May be involved in recruiting the MON1-CCZ1 complex to membranes enriched in phosphatidylinositol 3-phosphate (PtdIns[3]P) or other charged lipids, leading to recruitment of YPT7. This is GTP-binding protein YPT52 (YPT52) from Saccharomyces cerevisiae (strain ATCC 204508 / S288c) (Baker's yeast).